The primary structure comprises 252 residues: Phosphate import ATP-binding protein PstB 1 (252 aa).

In terms of domain architecture, ABC transporter spans 6 to 247; sequence LQVSDLSVYY…PKHKETEDYI (242 aa). 38-45 contacts ATP; it reads GPSGSGKS.

It belongs to the ABC transporter superfamily. Phosphate importer (TC 3.A.1.7) family. In terms of assembly, the complex is composed of two ATP-binding proteins (PstB), two transmembrane proteins (PstC and PstA) and a solute-binding protein (PstS).

It is found in the cell membrane. The enzyme catalyses phosphate(out) + ATP + H2O = ADP + 2 phosphate(in) + H(+). Its function is as follows. Part of the ABC transporter complex PstSACB involved in phosphate import. Responsible for energy coupling to the transport system. In Streptococcus agalactiae serotype Ia (strain ATCC 27591 / A909 / CDC SS700), this protein is Phosphate import ATP-binding protein PstB 1.